We begin with the raw amino-acid sequence, 378 residues long: Merozoite surface protein P41 (378 aa).

An N-terminal signal peptide occupies residues 1–20 (MKGVIFCLVVLLWRQAWVSS). The 6-Cys 1 domain maps to 21-133 (KSHKCDFTKE…LKINRFLKDD (113 aa)). Disulfide bonds link Cys25-Cys42, Cys56-Cys113, and Cys64-Cys111. 4 N-linked (GlcNAc...) asparagine glycosylation sites follow: Asn77, Asn149, Asn182, and Asn205. Residues 241 to 375 (VIKGCDFGNN…GESEVVLNSF (135 aa)) enclose the 6-Cys 2 domain. Disulfide bonds link Cys245–Cys270, Cys284–Cys348, and Cys297–Cys346. N-linked (GlcNAc...) asparagine glycosylation occurs at Asn351.

As to quaternary structure, heterodimer; heterodimerizes with PF12. May form an antiparallel heterodimer with PF12. Processed into a soluble form.

The protein resides in the cell surface. It is found in the cell membrane. In Plasmodium falciparum (isolate 3D7), this protein is Merozoite surface protein P41 (PF41).